The sequence spans 513 residues: Solute carrier family 2, facilitated glucose transporter member 7 (513 aa).

Residues 1–21 (MEDKEIGTPLPLPHSEARLQP) lie on the Cytoplasmic side of the membrane. Residues 22 to 42 (TLVLTTLSAAFGSVFQYGYNI) form a helical membrane-spanning segment. The Extracellular portion of the chain corresponds to 43 to 78 (AVINTPHKVFKSFYNDTHFERHGTFMDESTLLLLWS). An N-linked (GlcNAc...) asparagine glycan is attached at asparagine 57. A helical membrane pass occupies residues 79 to 99 (CTVSMFPLGGLLGSLVVGLMV). Residues 100–107 (NKWGRKGT) lie on the Cytoplasmic side of the membrane. Residues 108-128 (LLINNVFAITSAVLMGVSKVA) form a helical membrane-spanning segment. Residues 129-138 (RAFELIILSR) are Extracellular-facing. A helical membrane pass occupies residues 139-159 (VLVGICAGIAYSTLPMYLGEL). Residues 160–172 (APQNLRGALGTMT) are Cytoplasmic-facing. The chain crosses the membrane as a helical span at residues 173–193 (EVFVIIGVLLAQIFSLQAILG). The Extracellular segment spans residues 194–198 (NATGW). Residues 199–219 (PILLALTGVPAVIQLLSLPFF) traverse the membrane as a helical segment. Residues 220–282 (PESPRYTLIE…LNLFTFRPLR (63 aa)) lie on the Cytoplasmic side of the membrane. A helical transmembrane segment spans residues 283–303 (WQLISIVVLMAGQQLSGINAV). Residues 295–296 (QQ) and asparagine 301 contribute to the D-glucose site. Over 304–322 (NYYADVIYTSAGVDPTQSQ) the chain is Extracellular. The chain crosses the membrane as a helical span at residues 323 to 343 (YVTLGSGVINLVMTLVSAVII). Asparagine 332 is a binding site for D-glucose. The Cytoplasmic segment spans residues 344-351 (ERLGRRIL). The helical transmembrane segment at 352 to 372 (LLSGYAICCSACLVLTVALLL) threads the bilayer. Topologically, residues 373-380 (QSTAPELS) are extracellular. Residues 381-401 (YLSIVCVFSYIVGHSIGPSPV) form a helical membrane-spanning segment. Residues 402–416 (PSVVRTEIVLQSSRT) lie on the Cytoplasmic side of the membrane. Residues 417-437 (AAFTVDGAVHWLTNFIVGLTF) traverse the membrane as a helical segment. Topologically, residues 438–446 (PSIQVAIGA) are extracellular. A helical transmembrane segment spans residues 447–467 (YSFLVFAGVCILTAAYIYVVI). Residues 468-513 (PETKGRTFVEINCAFAKRNGVEFPEEKEVATAKPHTPSLPTKETAF) lie on the Cytoplasmic side of the membrane. Residues 494-513 (KEVATAKPHTPSLPTKETAF) are disordered.

The protein belongs to the major facilitator superfamily. Sugar transporter (TC 2.A.1.1) family. Glucose transporter subfamily.

Its subcellular location is the cell membrane. It localises to the apical cell membrane. It catalyses the reaction D-glucose(out) = D-glucose(in). The enzyme catalyses D-fructose(out) = D-fructose(in). Probable sugar transporter. Even if its physiological substrate is subject to discussion, it is able to transport glucose and fructose. Does not transport galactose, 2-deoxy-d-glucose and xylose. This Mus musculus (Mouse) protein is Solute carrier family 2, facilitated glucose transporter member 7.